The following is a 480-amino-acid chain: Aspartyl/glutamyl-tRNA(Asn/Gln) amidotransferase subunit B (480 aa).

It belongs to the GatB/GatE family. GatB subfamily. As to quaternary structure, heterotrimer of A, B and C subunits.

The enzyme catalyses L-glutamyl-tRNA(Gln) + L-glutamine + ATP + H2O = L-glutaminyl-tRNA(Gln) + L-glutamate + ADP + phosphate + H(+). It catalyses the reaction L-aspartyl-tRNA(Asn) + L-glutamine + ATP + H2O = L-asparaginyl-tRNA(Asn) + L-glutamate + ADP + phosphate + 2 H(+). In terms of biological role, allows the formation of correctly charged Asn-tRNA(Asn) or Gln-tRNA(Gln) through the transamidation of misacylated Asp-tRNA(Asn) or Glu-tRNA(Gln) in organisms which lack either or both of asparaginyl-tRNA or glutaminyl-tRNA synthetases. The reaction takes place in the presence of glutamine and ATP through an activated phospho-Asp-tRNA(Asn) or phospho-Glu-tRNA(Gln). The chain is Aspartyl/glutamyl-tRNA(Asn/Gln) amidotransferase subunit B from Streptococcus pneumoniae (strain CGSP14).